Here is a 209-residue protein sequence, read N- to C-terminus: Guanylate kinase (209 aa).

The Guanylate kinase-like domain occupies 5-182 (GLLIVISGPS…AVTKINSIIV (178 aa)). ATP is bound at residue 12–19 (GPSGAGKG).

This sequence belongs to the guanylate kinase family.

It localises to the cytoplasm. The enzyme catalyses GMP + ATP = GDP + ADP. In terms of biological role, essential for recycling GMP and indirectly, cGMP. The polypeptide is Guanylate kinase (Clostridium acetobutylicum (strain ATCC 824 / DSM 792 / JCM 1419 / IAM 19013 / LMG 5710 / NBRC 13948 / NRRL B-527 / VKM B-1787 / 2291 / W)).